A 668-amino-acid polypeptide reads, in one-letter code: tRNA 5-methylaminomethyl-2-thiouridine biosynthesis bifunctional protein MnmC (668 aa).

The tRNA (mnm(5)s(2)U34)-methyltransferase stretch occupies residues 1–245 (MKHYSIQPAN…KREMLCGVME (245 aa)). The interval 270-668 (IGGGIACALL…LLKGKAVKAG (399 aa)) is FAD-dependent cmnm(5)s(2)U34 oxidoreductase.

The protein in the N-terminal section; belongs to the methyltransferase superfamily. tRNA (mnm(5)s(2)U34)-methyltransferase family. This sequence in the C-terminal section; belongs to the DAO family. Requires FAD as cofactor.

It localises to the cytoplasm. It carries out the reaction 5-aminomethyl-2-thiouridine(34) in tRNA + S-adenosyl-L-methionine = 5-methylaminomethyl-2-thiouridine(34) in tRNA + S-adenosyl-L-homocysteine + H(+). Catalyzes the last two steps in the biosynthesis of 5-methylaminomethyl-2-thiouridine (mnm(5)s(2)U) at the wobble position (U34) in tRNA. Catalyzes the FAD-dependent demodification of cmnm(5)s(2)U34 to nm(5)s(2)U34, followed by the transfer of a methyl group from S-adenosyl-L-methionine to nm(5)s(2)U34, to form mnm(5)s(2)U34. This chain is tRNA 5-methylaminomethyl-2-thiouridine biosynthesis bifunctional protein MnmC, found in Shigella boydii serotype 4 (strain Sb227).